Consider the following 416-residue polypeptide: Adenylosuccinate synthetase (416 aa).

GTP is bound by residues 13–19 (GDEGKGK) and 41–43 (GHT). Asp-14 functions as the Proton acceptor in the catalytic mechanism. Mg(2+)-binding residues include Asp-14 and Gly-41. IMP is bound by residues 14–17 (DEGK), 39–42 (NAGH), Thr-126, Arg-140, Gln-220, Thr-235, and Arg-299. The Proton donor role is filled by His-42. Residue 295–301 (TTTGRKR) participates in substrate binding. GTP-binding positions include Arg-301, 327 to 329 (KLD), and 405 to 407 (STS).

It belongs to the adenylosuccinate synthetase family. In terms of assembly, homodimer. The cofactor is Mg(2+).

It localises to the cytoplasm. It catalyses the reaction IMP + L-aspartate + GTP = N(6)-(1,2-dicarboxyethyl)-AMP + GDP + phosphate + 2 H(+). It participates in purine metabolism; AMP biosynthesis via de novo pathway; AMP from IMP: step 1/2. In terms of biological role, plays an important role in the de novo pathway of purine nucleotide biosynthesis. Catalyzes the first committed step in the biosynthesis of AMP from IMP. The chain is Adenylosuccinate synthetase from Campylobacter hominis (strain ATCC BAA-381 / DSM 21671 / CCUG 45161 / LMG 19568 / NCTC 13146 / CH001A).